The primary structure comprises 210 residues: MAFVKRVTQETNIQLALDLDGGSVSVRESILGKEYASGDGQTIHVHTGVGFLDHMLTALAKHGGWSLILECIGDLHIDDHHTVEDCGIALGQAFKEALGSVRGIKRFGHGFAPLDEALSRAVVDFSNRPFAVVELGLKRERIGQLSTEMIPHFLESFATEARITMHVDCLRGTNDHHRSESAFKALAIAIREARTPTGRDDVPSTKGVLA.

It belongs to the imidazoleglycerol-phosphate dehydratase family.

It catalyses the reaction D-erythro-1-(imidazol-4-yl)glycerol 3-phosphate = 3-(imidazol-4-yl)-2-oxopropyl phosphate + H2O. It participates in amino-acid biosynthesis; L-histidine biosynthesis; L-histidine from 5-phospho-alpha-D-ribose 1-diphosphate: step 6/9. The sequence is that of Imidazoleglycerol-phosphate dehydratase (HIS3) from Candida glabrata (strain ATCC 2001 / BCRC 20586 / JCM 3761 / NBRC 0622 / NRRL Y-65 / CBS 138) (Yeast).